The sequence spans 330 residues: Stomatin-1 (330 aa).

The segment covering 1-19 (MQPSETVEMQEMAQPSGQQ) has biased composition (polar residues). The segment at 1–27 (MQPSETVEMQEMAQPSGQQRDVEARVQ) is disordered. Residues 42–62 (MFCIAMSYVLIFLTFPVSVFM) form a helical membrane-spanning segment.

The protein belongs to the band 7/mec-2 family.

The protein localises to the membrane. This chain is Stomatin-1 (sto-1), found in Caenorhabditis elegans.